Reading from the N-terminus, the 599-residue chain is Putative clathrin assembly protein At1g03050 (599 aa).

An ENTH domain is found at 26–162 (GRSASLSELD…DFRMQARHGK (137 aa)). Disordered regions lie at residues 332–382 (KQSK…PEEE) and 580–599 (QGHM…TPQY). Composition is skewed to acidic residues over residues 341–359 (ADED…EQED) and 373–382 (EEDDVKPEEE). Positions 585–599 (LRQNQNQPYSYTPQY) are enriched in polar residues.

The protein resides in the membrane. The protein localises to the clathrin-coated pit. Its subcellular location is the golgi apparatus. It is found in the cytoplasmic vesicle. It localises to the clathrin-coated vesicle. This Arabidopsis thaliana (Mouse-ear cress) protein is Putative clathrin assembly protein At1g03050.